Consider the following 230-residue polypeptide: UPF0173 metal-dependent hydrolase RHOS4_08540 (230 aa).

The protein belongs to the UPF0173 family.

The chain is UPF0173 metal-dependent hydrolase RHOS4_08540 from Cereibacter sphaeroides (strain ATCC 17023 / DSM 158 / JCM 6121 / CCUG 31486 / LMG 2827 / NBRC 12203 / NCIMB 8253 / ATH 2.4.1.) (Rhodobacter sphaeroides).